A 394-amino-acid polypeptide reads, in one-letter code: NADH dehydrogenase [ubiquinone] iron-sulfur protein 2 (394 aa).

It belongs to the complex I 49 kDa subunit family. Complex I is composed of at least 49 different subunits. This is a component of the iron-sulfur (IP) fragment of the enzyme.

It localises to the mitochondrion. The catalysed reaction is a ubiquinone + NADH + 5 H(+)(in) = a ubiquinol + NAD(+) + 4 H(+)(out). Core subunit of the mitochondrial membrane respiratory chain NADH dehydrogenase (Complex I) that is believed to belong to the minimal assembly required for catalysis. Complex I functions in the transfer of electrons from NADH to the respiratory chain. The immediate electron acceptor for the enzyme is believed to be ubiquinone. Component of the iron-sulfur (IP) fragment of the enzyme. This chain is NADH dehydrogenase [ubiquinone] iron-sulfur protein 2 (NAD7), found in Arabidopsis thaliana (Mouse-ear cress).